A 156-amino-acid chain; its full sequence is ATP synthase subunit b (156 aa).

The helical transmembrane segment at 7-29 (LIGQLIAFALFTWFCVKFVWPPI) threads the bilayer.

This sequence belongs to the ATPase B chain family. F-type ATPases have 2 components, F(1) - the catalytic core - and F(0) - the membrane proton channel. F(1) has five subunits: alpha(3), beta(3), gamma(1), delta(1), epsilon(1). F(0) has three main subunits: a(1), b(2) and c(10-14). The alpha and beta chains form an alternating ring which encloses part of the gamma chain. F(1) is attached to F(0) by a central stalk formed by the gamma and epsilon chains, while a peripheral stalk is formed by the delta and b chains.

The protein localises to the cell inner membrane. F(1)F(0) ATP synthase produces ATP from ADP in the presence of a proton or sodium gradient. F-type ATPases consist of two structural domains, F(1) containing the extramembraneous catalytic core and F(0) containing the membrane proton channel, linked together by a central stalk and a peripheral stalk. During catalysis, ATP synthesis in the catalytic domain of F(1) is coupled via a rotary mechanism of the central stalk subunits to proton translocation. In terms of biological role, component of the F(0) channel, it forms part of the peripheral stalk, linking F(1) to F(0). This is ATP synthase subunit b from Actinobacillus succinogenes (strain ATCC 55618 / DSM 22257 / CCUG 43843 / 130Z).